A 918-amino-acid chain; its full sequence is MTDTSSSSSSSSASSVSAHQPTQEKPAKTYDDAASESSDDDDIDALIEELQSNHGVDDEDSDNDGPVAAGEARPVPEEYLQTDPSYGLTSDEVLKRRKKYGLNQMADEKESLVVKFVMFFVGPIQFVMEAAAILAAGLSDWVDFGVICGLLMLNAGVGFVQEFQAGSIVDELKKTLANTAVVIRDGQLVEIPANEVVPGDILQLEDGTVIPTDGRIVTEDCFLQIDQSAITGESLAVDKHYGDQTFSSSTVKRGEGFMVVTATGDNTFVGRAAALVNKAAGGQGHFTEVLNGIGIILLVLVIATLLLVWTACFYRTNGIVRILRYTLGITIIGVPVGLPAVVTTTMAVGAAYLAKKQAIVQKLSAIESLAGVEILCSDKTGTLTKNKLSLHEPYTVEGVSPDDLMLTACLAASRKKKGLDAIDKAFLKSLKQYPKAKDALTKYKVLEFHPFDPVSKKVTAVVESPEGERIVCVKGAPLFVLKTVEEDHPIPEDVHENYENKVAELASRGFRALGVARKRGEGHWEILGVMPCMDPPRDDTAQTVSEARHLGLRVKMLTGDAVGIAKETCRQLGLGTNIYNAERLGLGGGGDMPGSELADFVENADGFAEVFPQHKYRVVEILQNRGYLVAMTGDGVNDAPSLKKADTGIAVEGATDAARSAADIVFLAPGLSAIIDALKTSRQIFHRMYSYVVYRIALSLHLEIFLGLWIAILDNSLDIDLIVFIAIFADVATLAIAYDNAPYSPKPVKWNLPRLWGMSIILGIVLAIGSWITLTTMFLPKGGIIQNFGAMNGIMFLQISLTENWLIFITRAAGPFWSSIPSWQLAGAVFAVDIIATMFTLFGWWSENWTDIVTVVRVWIWSIGIFCVLGGFYYEMSTSEAFDRLMNGKPMKEKKSTRSVEDFMAAMQRVSTQHEKET.

Low complexity predominate over residues 1-18 (MTDTSSSSSSSSASSVSA). The disordered stretch occupies residues 1 to 84 (MTDTSSSSSS…VPEEYLQTDP (84 aa)). The Cytoplasmic portion of the chain corresponds to 1-115 (MTDTSSSSSS…ADEKESLVVK (115 aa)). Over residues 33–47 (AASESSDDDDIDALI) the composition is skewed to acidic residues. Serine 61 carries the post-translational modification Phosphoserine. Residues 116 to 136 (FVMFFVGPIQFVMEAAAILAA) form a helical membrane-spanning segment. The Extracellular segment spans residues 137–140 (GLSD). The helical transmembrane segment at 141–160 (WVDFGVICGLLMLNAGVGFV) threads the bilayer. Residues 161–291 (QEFQAGSIVD…GQGHFTEVLN (131 aa)) lie on the Cytoplasmic side of the membrane. At threonine 175 the chain carries Phosphothreonine. Lysine 252 is covalently cross-linked (Glycyl lysine isopeptide (Lys-Gly) (interchain with G-Cter in ubiquitin)). A helical membrane pass occupies residues 292 to 313 (GIGIILLVLVIATLLLVWTACF). Over 314-325 (YRTNGIVRILRY) the chain is Extracellular. The chain crosses the membrane as a helical span at residues 326–347 (TLGITIIGVPVGLPAVVTTTMA). Residues 348–719 (VGAAYLAKKQ…IAILDNSLDI (372 aa)) are Cytoplasmic-facing. The 4-aspartylphosphate intermediate role is filled by aspartate 378. Lysine 555 is covalently cross-linked (Glycyl lysine isopeptide (Lys-Gly) (interchain with G-Cter in ubiquitin)). Mg(2+) contacts are provided by aspartate 634 and aspartate 638. A helical transmembrane segment spans residues 720–738 (DLIVFIAIFADVATLAIAY). The Extracellular portion of the chain corresponds to 739 to 754 (DNAPYSPKPVKWNLPR). The helical transmembrane segment at 755 to 774 (LWGMSIILGIVLAIGSWITL) threads the bilayer. At 775–824 (TTMFLPKGGIIQNFGAMNGIMFLQISLTENWLIFITRAAGPFWSSIPSWQ) the chain is on the cytoplasmic side. The chain crosses the membrane as a helical span at residues 825-845 (LAGAVFAVDIIATMFTLFGWW). The Extracellular segment spans residues 846–857 (SENWTDIVTVVR). A helical membrane pass occupies residues 858-874 (VWIWSIGIFCVLGGFYY). Topologically, residues 875 to 918 (EMSTSEAFDRLMNGKPMKEKKSTRSVEDFMAAMQRVSTQHEKET) are cytoplasmic. At serine 911 the chain carries Phosphoserine. 2 positions are modified to phosphothreonine: threonine 912 and threonine 918.

It belongs to the cation transport ATPase (P-type) (TC 3.A.3) family. Type IIIA subfamily. In terms of assembly, interacts with its cargot receptor EXP1 for its transport within the cell and maturation. In terms of processing, phosphorylated on multiple Ser and Thr residues.

Its subcellular location is the cell membrane. The catalysed reaction is ATP + H2O + H(+)(in) = ADP + phosphate + 2 H(+)(out). In terms of biological role, the plasma membrane ATPase of plants and fungi is a hydrogen ion pump. The proton gradient it generates drives the active transport of nutrients by H(+)-symport. The resulting external acidification and/or internal alkinization may mediate growth responses. In Saccharomyces cerevisiae (strain ATCC 204508 / S288c) (Baker's yeast), this protein is Plasma membrane ATPase 1 (PMA1).